A 675-amino-acid chain; its full sequence is Putative elongation factor TypA-like SVR3, chloroplastic (675 aa).

A chloroplast-targeting transit peptide spans 1-58 (MELSLSTSSASPAVLRRQASPLLHKQQVLGVSFASALKPGGGALRFPSRRPLPRPITC). A disordered region spans residues 43–76 (ALRFPSRRPLPRPITCSASPSTAEPASEVKKKQL). Low complexity predominate over residues 59 to 68 (SASPSTAEPA). The tr-type G domain maps to 80-275 (DNVRNIAIVA…AIIRCVPGPN (196 aa)).

Belongs to the TRAFAC class translation factor GTPase superfamily. Classic translation factor GTPase family. BipA subfamily.

The protein resides in the plastid. Its subcellular location is the chloroplast. Putative chloroplastic elongation factor involved in response to chilling stress. Required for proper chloroplast rRNA processing and/or translation at low temperature. Involved in plastid protein homeostasis. The polypeptide is Putative elongation factor TypA-like SVR3, chloroplastic (SVR3) (Arabidopsis thaliana (Mouse-ear cress)).